A 423-amino-acid chain; its full sequence is Transmembrane protease serine 11E (423 aa).

At 1 to 18 (MYRSCVVRARKRTCVEPW) the chain is on the cytoplasmic side. Residues 19-39 (VIGIISFLSLIVLAVCIGLTV) form a helical; Signal-anchor for type II membrane protein membrane-spanning segment. Residues 40–423 (HYVRYNHRRT…RHWIASNTGI (384 aa)) are Extracellular-facing. The 119-residue stretch at 48-166 (RTYNYYSTLS…ESVKIKKINK (119 aa)) folds into the SEA domain. N-linked (GlcNAc...) asparagine glycans are attached at residues N74, N165, N182, and N223. 4 disulfide bridges follow: C176/C297, C217/C233, C342/C358, and C369/C398. Positions 192–422 (IVGGTPVEEE…FRHWIASNTG (231 aa)) constitute a Peptidase S1 domain. Active-site charge relay system residues include H232 and D277. The active-site Charge relay system is S373.

It belongs to the peptidase S1 family. In terms of assembly, forms a heterodimer with SERPINA5 and SERPINE1. Post-translationally, N-glycosylated. In terms of tissue distribution, expressed in epidermal, oral and male reproductive tissues.

The protein localises to the cell membrane. The protein resides in the secreted. Its activity is regulated as follows. Inhibited by SERPINA5. Serine protease which possesses both gelatinolytic and caseinolytic activities. Shows a preference for Arg in the P1 position. The protein is Transmembrane protease serine 11E (Tmprss11e) of Mus musculus (Mouse).